Here is a 268-residue protein sequence, read N- to C-terminus: GTP cyclohydrolase FolE2 (268 aa).

This sequence belongs to the GTP cyclohydrolase IV family.

It carries out the reaction GTP + H2O = 7,8-dihydroneopterin 3'-triphosphate + formate + H(+). It participates in cofactor biosynthesis; 7,8-dihydroneopterin triphosphate biosynthesis; 7,8-dihydroneopterin triphosphate from GTP: step 1/1. In terms of biological role, converts GTP to 7,8-dihydroneopterin triphosphate. This Paraburkholderia phymatum (strain DSM 17167 / CIP 108236 / LMG 21445 / STM815) (Burkholderia phymatum) protein is GTP cyclohydrolase FolE2.